The primary structure comprises 195 residues: Imidazoleglycerol-phosphate dehydratase (195 aa).

It belongs to the imidazoleglycerol-phosphate dehydratase family.

Its subcellular location is the cytoplasm. The enzyme catalyses D-erythro-1-(imidazol-4-yl)glycerol 3-phosphate = 3-(imidazol-4-yl)-2-oxopropyl phosphate + H2O. It participates in amino-acid biosynthesis; L-histidine biosynthesis; L-histidine from 5-phospho-alpha-D-ribose 1-diphosphate: step 6/9. This chain is Imidazoleglycerol-phosphate dehydratase, found in Burkholderia ambifaria (strain MC40-6).